The following is a 105-amino-acid chain: Large ribosomal subunit protein uL24 (105 aa).

The protein belongs to the universal ribosomal protein uL24 family. Part of the 50S ribosomal subunit.

One of two assembly initiator proteins, it binds directly to the 5'-end of the 23S rRNA, where it nucleates assembly of the 50S subunit. Its function is as follows. One of the proteins that surrounds the polypeptide exit tunnel on the outside of the subunit. This chain is Large ribosomal subunit protein uL24, found in Mycobacterium tuberculosis (strain CDC 1551 / Oshkosh).